Here is a 299-residue protein sequence, read N- to C-terminus: ATP phosphoribosyltransferase (299 aa).

This sequence belongs to the ATP phosphoribosyltransferase family. Long subfamily. Mg(2+) serves as cofactor.

It localises to the cytoplasm. The catalysed reaction is 1-(5-phospho-beta-D-ribosyl)-ATP + diphosphate = 5-phospho-alpha-D-ribose 1-diphosphate + ATP. Its pathway is amino-acid biosynthesis; L-histidine biosynthesis; L-histidine from 5-phospho-alpha-D-ribose 1-diphosphate: step 1/9. With respect to regulation, feedback inhibited by histidine. Catalyzes the condensation of ATP and 5-phosphoribose 1-diphosphate to form N'-(5'-phosphoribosyl)-ATP (PR-ATP). Has a crucial role in the pathway because the rate of histidine biosynthesis seems to be controlled primarily by regulation of HisG enzymatic activity. The sequence is that of ATP phosphoribosyltransferase from Shewanella sediminis (strain HAW-EB3).